We begin with the raw amino-acid sequence, 289 residues long: Ribosomal RNA small subunit methyltransferase A (289 aa).

Positions 27, 29, 54, 76, 102, and 123 each coordinate S-adenosyl-L-methionine.

This sequence belongs to the class I-like SAM-binding methyltransferase superfamily. rRNA adenine N(6)-methyltransferase family. RsmA subfamily.

The protein resides in the cytoplasm. The catalysed reaction is adenosine(1518)/adenosine(1519) in 16S rRNA + 4 S-adenosyl-L-methionine = N(6)-dimethyladenosine(1518)/N(6)-dimethyladenosine(1519) in 16S rRNA + 4 S-adenosyl-L-homocysteine + 4 H(+). In terms of biological role, specifically dimethylates two adjacent adenosines (A1518 and A1519) in the loop of a conserved hairpin near the 3'-end of 16S rRNA in the 30S particle. May play a critical role in biogenesis of 30S subunits. The sequence is that of Ribosomal RNA small subunit methyltransferase A from Maricaulis maris (strain MCS10) (Caulobacter maris).